Reading from the N-terminus, the 460-residue chain is A-type ATP synthase subunit B (460 aa).

This sequence belongs to the ATPase alpha/beta chains family. In terms of assembly, has multiple subunits with at least A(3), B(3), C, D, E, F, H, I and proteolipid K(x).

The protein localises to the cell membrane. Functionally, component of the A-type ATP synthase that produces ATP from ADP in the presence of a proton gradient across the membrane. The B chain is a regulatory subunit. The sequence is that of A-type ATP synthase subunit B from Methanosarcina acetivorans (strain ATCC 35395 / DSM 2834 / JCM 12185 / C2A).